The primary structure comprises 207 residues: Flavin-dependent thymidylate synthase (207 aa).

The ThyX domain occupies 1–204 (MQITLLFHTP…KFIFEHCLHK (204 aa)). FAD contacts are provided by residues serine 50 and 74–76 (RHR). Residues 71 to 74 (EVAR), 84 to 86 (STR), and lysine 143 contribute to the dUMP site. The short motif at 74–84 (RHRHTSPSVKS) is the ThyX motif element. FAD contacts are provided by residues 159–161 (NAR) and asparagine 165. Residue arginine 170 coordinates dUMP. Catalysis depends on arginine 170, which acts as the Involved in ionization of N3 of dUMP, leading to its activation.

Belongs to the thymidylate synthase ThyX family. As to quaternary structure, homotetramer. It depends on FAD as a cofactor.

It carries out the reaction dUMP + (6R)-5,10-methylene-5,6,7,8-tetrahydrofolate + NADPH + H(+) = dTMP + (6S)-5,6,7,8-tetrahydrofolate + NADP(+). It participates in pyrimidine metabolism; dTTP biosynthesis. Functionally, catalyzes the reductive methylation of 2'-deoxyuridine-5'-monophosphate (dUMP) to 2'-deoxythymidine-5'-monophosphate (dTMP) while utilizing 5,10-methylenetetrahydrofolate (mTHF) as the methyl donor, and NADPH and FADH(2) as the reductant. This chain is Flavin-dependent thymidylate synthase, found in Campylobacter jejuni subsp. jejuni serotype O:2 (strain ATCC 700819 / NCTC 11168).